The following is a 710-amino-acid chain: FAST kinase domain-containing protein 2, mitochondrial (710 aa).

Phosphoserine occurs at positions 126 and 140. Positions 634–691 (VAVLCVSRSAYCLGSSHPRGFLAMKMRHLNAMGFHVILVNNWEMDKLEMEDAVTFLKT) constitute an RAP domain. Residue Ser708 is modified to Phosphoserine.

Belongs to the FAST kinase family. As to quaternary structure, monomer. Found in a complex with GRSF1, DDX28, DHX30 and FASTKD5. Associates with the 16S mitochondrial rRNA (16S mt-rRNA). Forms a regulatory protein-RNA complex, consisting of RCC1L, NGRN, RPUSD3, RPUSD4, TRUB2, FASTKD2 and 16S mt-rRNA. As to expression, expression detected in spleen, thymus, testis, ovary, colon, heart, smooth muscle, kidney, brain, lung, liver and white adipose tissue with highest expression in heart, smooth muscle and thyroid.

It is found in the mitochondrion matrix. The protein localises to the mitochondrion nucleoid. In terms of biological role, plays an important role in assembly of the mitochondrial large ribosomal subunit. As a component of a functional protein-RNA module, consisting of RCC1L, NGRN, RPUSD3, RPUSD4, TRUB2, FASTKD2 and 16S mitochondrial ribosomal RNA (16S mt-rRNA), controls 16S mt-rRNA abundance and is required for intra-mitochondrial translation. May play a role in mitochondrial apoptosis. The protein is FAST kinase domain-containing protein 2, mitochondrial of Homo sapiens (Human).